The sequence spans 453 residues: tRNA-2-methylthio-N(6)-dimethylallyladenosine synthase (453 aa).

An MTTase N-terminal domain is found at 17–135; the sequence is GTFFIETWGC…FPEYLNRAKQ (119 aa). Positions 26, 62, 96, 172, 176, and 179 each coordinate [4Fe-4S] cluster. In terms of domain architecture, Radical SAM core spans 158–388; that stretch reads RKSSTKAFVT…VEVVNKSCEK (231 aa). Residues 391–453 enclose the TRAM domain; the sequence is KKYQDRIVKV…LSFSLEGEEV (63 aa).

This sequence belongs to the methylthiotransferase family. MiaB subfamily. As to quaternary structure, monomer. Requires [4Fe-4S] cluster as cofactor.

It is found in the cytoplasm. It carries out the reaction N(6)-dimethylallyladenosine(37) in tRNA + (sulfur carrier)-SH + AH2 + 2 S-adenosyl-L-methionine = 2-methylsulfanyl-N(6)-dimethylallyladenosine(37) in tRNA + (sulfur carrier)-H + 5'-deoxyadenosine + L-methionine + A + S-adenosyl-L-homocysteine + 2 H(+). Catalyzes the methylthiolation of N6-(dimethylallyl)adenosine (i(6)A), leading to the formation of 2-methylthio-N6-(dimethylallyl)adenosine (ms(2)i(6)A) at position 37 in tRNAs that read codons beginning with uridine. The chain is tRNA-2-methylthio-N(6)-dimethylallyladenosine synthase from Clostridium tetani (strain Massachusetts / E88).